A 147-amino-acid polypeptide reads, in one-letter code: Protein-export protein SecB 2 (147 aa).

It belongs to the SecB family. As to quaternary structure, homotetramer, a dimer of dimers. One homotetramer interacts with 1 SecA dimer.

The protein resides in the cytoplasm. Functionally, one of the proteins required for the normal export of preproteins out of the cell cytoplasm. It is a molecular chaperone that binds to a subset of precursor proteins, maintaining them in a translocation-competent state. It also specifically binds to its receptor SecA. This Francisella tularensis subsp. novicida (strain U112) protein is Protein-export protein SecB 2.